The sequence spans 206 residues: Thymidylate kinase (206 aa).

An ATP-binding site is contributed by 10 to 17; sequence GIDGAGKS.

It belongs to the thymidylate kinase family.

The enzyme catalyses dTMP + ATP = dTDP + ADP. In terms of biological role, phosphorylation of dTMP to form dTDP in both de novo and salvage pathways of dTTP synthesis. This chain is Thymidylate kinase (tmk), found in Neisseria meningitidis serogroup B (strain ATCC BAA-335 / MC58).